The following is a 210-amino-acid chain: Somatotropin (210 aa).

The signal sequence occupies residues 1 to 22 (MGQVFLLMPVLLVSCFLSQGAA). His38 serves as a coordination point for Zn(2+). A disulfide bridge links Cys71 with Cys183. Glu192 lines the Zn(2+) pocket. An intrachain disulfide couples Cys200 to Cys208.

The protein belongs to the somatotropin/prolactin family.

The protein localises to the secreted. Functionally, growth hormone plays an important role in growth control and is involved in the regulation of several anabolic processes. Implicated as an osmoregulatory substance important for seawater adaptation. In Oncorhynchus kisutch (Coho salmon), this protein is Somatotropin (gh).